Here is a 60-residue protein sequence, read N- to C-terminus: Metallothionein B (60 aa).

Residues 1–28 (MDPCDCSKSGTCNCGGSCTCTNCSCTTC) form a beta region. Residues Cys-4, Cys-6, Cys-12, Cys-14, Cys-18, Cys-20, Cys-23, Cys-25, Cys-28, Cys-32, Cys-33, Cys-35, Cys-36, Cys-40, Cys-43, Cys-47, Cys-49, Cys-54, Cys-58, and Cys-59 each contribute to the a divalent metal cation site. Positions 29–60 (KKSCCPCCPSGCTKCASGCVCKGKTCDTSCCQ) are alpha.

It belongs to the metallothionein superfamily. Type 1 family.

Metallothioneins have a high content of cysteine residues that bind various heavy metals. The chain is Metallothionein B (mtb) from Dicentrarchus labrax (European seabass).